We begin with the raw amino-acid sequence, 735 residues long: Disintegrin and metalloproteinase domain-containing protein 2 (735 aa).

The signal sequence occupies residues 1–16 (MWRVLFLLSGLGGLWM). Residues 17-174 (DSNFDSLPVQ…FKLQSIEPQK (158 aa)) constitute a propeptide that is removed on maturation. Over 17–686 (DSNFDSLPVQ…ENVYHSKPMR (670 aa)) the chain is Extracellular. N-linked (GlcNAc...) asparagine glycans are attached at residues Asn-76, Asn-122, and Asn-220. Positions 178–375 (KYIEMHVVVE…QKSQCLHNQP (198 aa)) constitute a Peptidase M12B domain. 4 disulfides stabilise this stretch: Cys-287-Cys-370, Cys-329-Cys-354, Cys-331-Cys-336, and Cys-445-Cys-465. N-linked (GlcNAc...) asparagine glycosylation is found at Asn-353, Asn-459, and Asn-566. The 90-residue stretch at 384–473 (QAVCGNAKLE…SCPENHFIQT (90 aa)) folds into the Disintegrin domain. Residues 612–645 (LGYDCTTDKCNHRGVCNNKKHCHCSASYLPPDCS) form the EGF-like domain. 3 disulfide bridges follow: Cys-616–Cys-627, Cys-621–Cys-633, and Cys-635–Cys-644. The chain crosses the membrane as a helical span at residues 687–707 (WPLFLFIPFFIIFCVLIAIMV). Residues 708 to 735 (KVHFQRKKWRTEDYSTDEQPESESEPKG) are Cytoplasmic-facing. Residue Ser-729 is modified to Phosphoserine.

In terms of assembly, heterodimer with ADAM1/fertilin subunit alpha. The signal and the metalloprotease domain are cleaved during the epididymal maturation of the spermatozoa. In terms of tissue distribution, expressed specifically in testis.

The protein localises to the membrane. Its function is as follows. Sperm surface membrane protein that may be involved in sperm-egg plasma membrane adhesion and fusion during fertilization. Could have a direct role in sperm-zona binding or migration of sperm from the uterus into the oviduct. Interactions with egg membrane could be mediated via binding between its disintegrin-like domain to one or more integrins receptors on the egg. This is a non catalytic metalloprotease-like protein. The protein is Disintegrin and metalloproteinase domain-containing protein 2 (ADAM2) of Macaca fascicularis (Crab-eating macaque).